The following is a 68-amino-acid chain: Kasstasin (68 aa).

Positions 1-20 (MMKKSMLLLFFLGMVSFSLA) are cleaved as a signal peptide. Residues 21–44 (DDKREDEGEEKRADEGEEKRAAEE) constitute a propeptide that is removed on maturation. Residues 22-41 (DKREDEGEEKRADEGEEKRA) are disordered. At K67 the chain carries Lysine amide.

It belongs to the frog skin active peptide (FSAP) family. Brevinin subfamily. In terms of tissue distribution, expressed by the skin dorsal glands.

It is found in the secreted. In terms of biological role, peptide with potent vasoconstrictor properties (EC50=25 pM). Has moderate antimicrobial activity against Gram-positive bacterium S.aureus (MIC=55 uM) and against Gram-negative bacterium E.coli (MIC=110 uM). Not active against fungus C.albicans. Has weak hemolytic activity against horse erythrocytes. In Phlyctimantis maculatus (Red-legged running frog), this protein is Kasstasin.